The primary structure comprises 151 residues: Large ribosomal subunit protein bL9 (151 aa).

This sequence belongs to the bacterial ribosomal protein bL9 family.

Binds to the 23S rRNA. The sequence is that of Large ribosomal subunit protein bL9 from Desulfotalea psychrophila (strain LSv54 / DSM 12343).